The following is a 224-amino-acid chain: Elongation factor 1-beta (224 aa).

This sequence belongs to the EF-1-beta/EF-1-delta family. As to quaternary structure, EF-1 is composed of 4 subunits: alpha, beta (1B-alpha=beta'), delta (1B-beta), and gamma (1B-gamma).

Its function is as follows. EF-1-beta and EF-1-beta' stimulate the exchange of GDP bound to EF-1-alpha to GTP. This chain is Elongation factor 1-beta, found in Oryza sativa subsp. japonica (Rice).